We begin with the raw amino-acid sequence, 512 residues long: Glycosyltransferase sdnJ (512 aa).

The signal sequence occupies residues 1–24 (MHAKRPSVLFFTISDFGYVNVVLA). Asn-207 carries an N-linked (GlcNAc...) asparagine glycan.

This sequence belongs to the UDP-glycosyltransferase family.

It catalyses the reaction sordaricin + GDP-6-deoxy-alpha-D-altrose = 4'-O-demethylsordarin + GDP + H(+). It functions in the pathway antibiotic biosynthesis. In terms of biological role, glycosyltransferase; part of the gene cluster that mediates the biosynthesis of sordarin and hypoxysordarin, glycoside antibiotics with a unique tetracyclic diterpene aglycone structure. First, the geranylgeranyl diphosphate synthase sdnC constructs GGDP from farnesyl diphosphate and isopentenyl diphosphate. The diterpene cyclase sdnA then catalyzes the cyclization of GGDP to afford cycloaraneosene. Cycloaraneosene is then hydroxylated four times by the putative cytochrome P450 monooxygenases sdnB, sdnE, sdnF and sdnH to give a hydroxylated cycloaraneosene derivative such as cycloaraneosene-8,9,13,19-tetraol. Although the order of the hydroxylations is unclear, at least C8, C9 and C13 of the cycloaraneosene skeleton are hydroxylated before the sordaricin formation. Dehydration of the 13-hydroxy group of the hydroxylated cycloaraneosene derivative might be catalyzed by an unassigned hypothetical protein such as sdnG and sdnP to construct the cyclopentadiene moiety. The FAD-dependent oxidoreductase sdnN is proposed to catalyze the oxidation at C9 of the hydroxylated cycloaraneosene derivative and also catalyze the Baeyer-Villiger oxidation to give the lactone intermediate. The presumed lactone intermediate would be hydrolyzed to give an acrolein moiety and a carboxylate moiety. Then, [4+2]cycloaddition would occur between the acrolein moiety and the cyclopentadiene moiety to give sordaricin. SdnN might also be involved in the [4+2]cycloaddition after the hypothesized oxidation to accommodate the oxidized product and prompt the [4+2]cycloaddition. GDP-6-deoxy-D-altrose may be biosynthesized from GDP-D-mannose by the putative GDP-mannose-4,6-dehydratase sdnI and the short-chain dehydrogenase sdnK. The glycosyltransferase sdnJ catalyzes the attachment of 6-deoxy-D-altrose onto the 19-hydroxy group of sordaricin to give 4'-O-demethylsordarin. The methyltransferase sdnD would complete the biosynthesis of sordarin. Sordarin can be further modified into hypoxysordarin. The unique acyl chain at the 3'-hydroxy group of hypoxysordarin would be constructed by an iterative type I PKS sdnO and the trans-acting polyketide methyltransferase sdnL. SdnL would be responsible for the introduction of an alpha-methyl group of the polyketide chain. Alternatively, the beta-lactamase-like protein sdnR might be responsible for the cleavage and transfer of the polyketide chain from the PKS sdnO to sordarin. Two putative cytochrome P450 monooxygenases, sdnQ and sdnT, might catalyze the epoxidations of the polyketide chain to complete the biosynthesis of hypoxysordarin. Transcriptional regulators sdnM and sdnS are presumably encoded for the transcriptional regulation of the expression of the sdn gene cluster. This chain is Glycosyltransferase sdnJ, found in Sordaria araneosa (Pleurage araneosa).